The primary structure comprises 699 residues: MAREYKIEDYRNFGIMAHIDAGKTTTTERILYYTGKSHKIGEVHDGAATMDWMEQEQERGITITSAATTTFWKGRDGKTRRFNIIDTPGHVDFTIEVERSLRVLDGAIALLDANAGVEPQTETVWRQAEKYHVPRMIFCNKMDKTGADFYRSVEMIKMRLGATAVVMQLPIGAESDFKGVIDLIEMNALVWRDESLGAQWDVVEIPADMKEKAEEYREKLIETVVEIDEAAMEAYLEGTYPDNDKIRELVRRGTIDVKFHPMFCGTAFKNKGVQPLLDAVVDYLPSPIDIPAIKGIDVKTEGEITRKADDNEPLSMLAFKIMNDPFVGSLTFARIYSGKLEKGTSVMNTVKEKRERVGRMLQMHSNSREDIEEAFAGDIVALAGLKETTTGDTLCDPLKPVILERMEFPEPVIQIAIEPKTKGDQEKMGLALNRLAAEDPSFRVKTDEESGQTIIAGMGELHLDIIVDRMRREFKVEASVGAPQVAYRETITRKHEEDYTHKKQSGGTGQFARVKIVFEPNPEGEDFAFESKIVGGAVPKEYIPGVQKGIESVLSSGPLAGFPMLGVKATLIDGAFHDVDSSVLAFEIASRACFREAAKKAGAQLLEPIMKVEVVTPEDYVGDVIGDLNSRRGQIQGQEARGVAVVINAHVPLANMFKYVDNLRSMSQGRAQYTMLFDHYAPVPSNVAQEIQAKYSGQK.

Residues 8–288 (EDYRNFGIMA…AVVDYLPSPI (281 aa)) enclose the tr-type G domain. Residues 17 to 24 (AHIDAGKT), 86 to 90 (DTPGH), and 140 to 143 (NKMD) contribute to the GTP site.

The protein belongs to the TRAFAC class translation factor GTPase superfamily. Classic translation factor GTPase family. EF-G/EF-2 subfamily.

Its subcellular location is the cytoplasm. In terms of biological role, catalyzes the GTP-dependent ribosomal translocation step during translation elongation. During this step, the ribosome changes from the pre-translocational (PRE) to the post-translocational (POST) state as the newly formed A-site-bound peptidyl-tRNA and P-site-bound deacylated tRNA move to the P and E sites, respectively. Catalyzes the coordinated movement of the two tRNA molecules, the mRNA and conformational changes in the ribosome. The chain is Elongation factor G from Rhizobium meliloti (strain 1021) (Ensifer meliloti).